Consider the following 90-residue polypeptide: Delta-aiptatoxin-Adi1a (90 aa).

An N-terminal signal peptide occupies residues 1 to 21 (MKTAMLIAVLGFCAALCFVES). Residues 22–44 (SHEEEREAAVYLTDLVSKAESAI) constitute a propeptide that is removed on maturation. Cystine bridges form between C50–C86, C52–C77, and C70–C87.

It belongs to the sea anemone sodium channel inhibitory toxin family.

Its subcellular location is the secreted. The protein localises to the nematocyst. Its function is as follows. Cardioactive peptide that acts on voltage-gated sodium channels (hNav1.5/SCN5A) and voltage-gated potassium channels (Kv). The activity on sodium channels consists of inhibition on sodium current inactivation with no significant effect on current activation. This effect may be caused by direct interaction of the toxin with sodium channel site-3. The activity on potassium channels consists of a significant increase of the amplitude of the transient component of the potassium current, shifting the current threshold to more negative membrane potentials. These effects are concentration-dependent and reversible and may be due to a direct interaction between the toxin and the voltage-sensing domain of the channel. Physiologically, this toxin increases the amplitude of cardiomyocyte contraction and slows the late phase of the twitch relaxation velocity with no induction of spontaneous twitching. It increases action potential duration of cardiomyocytes with no effect on its threshold and on the cell resting potential. On insects, it shows neurotoxic activity to the blowfly larvae S.falculaty, causing an immediate spasm that progressed to body contraction and paralysis. This is Delta-aiptatoxin-Adi1a from Exaiptasia diaphana (Tropical sea anemone).